A 1129-amino-acid polypeptide reads, in one-letter code: DNA-directed RNA polymerase I subunit RPA2 (1129 aa).

Residues 1061-1093 form a C4-type zinc finger; that stretch reads CHKCGSILAPLQRIVKRNETGGLSSQPDTCRLC.

This sequence belongs to the RNA polymerase beta chain family. In terms of assembly, component of the RNA polymerase I (Pol I) complex consisting of at least 13 subunits.

It is found in the nucleus. The protein localises to the nucleolus. It carries out the reaction RNA(n) + a ribonucleoside 5'-triphosphate = RNA(n+1) + diphosphate. Functionally, DNA-dependent RNA polymerase catalyzes the transcription of DNA into RNA using the four ribonucleoside triphosphates as substrates. Second largest core component of RNA polymerase I which synthesizes ribosomal RNA precursors. Proposed to contribute to the polymerase catalytic activity and forms the polymerase active center together with the largest subunit. Pol I is composed of mobile elements and RPA2 is part of the core element with the central large cleft and probably a clamp element that moves to open and close the cleft. The sequence is that of DNA-directed RNA polymerase I subunit RPA2 from Drosophila melanogaster (Fruit fly).